A 324-amino-acid polypeptide reads, in one-letter code: DNA-directed RNA polymerase subunit alpha (324 aa).

The tract at residues 1 to 228 (MIEFQKPTIR…EHFNLFTDLS (228 aa)) is alpha N-terminal domain (alpha-NTD). Residues 245-324 (RNKLLDMTIE…STPKEEEEEK (80 aa)) form an alpha C-terminal domain (alpha-CTD) region.

This sequence belongs to the RNA polymerase alpha chain family. Homodimer. The RNAP catalytic core consists of 2 alpha, 1 beta, 1 beta' and 1 omega subunit. When a sigma factor is associated with the core the holoenzyme is formed, which can initiate transcription.

It catalyses the reaction RNA(n) + a ribonucleoside 5'-triphosphate = RNA(n+1) + diphosphate. Its function is as follows. DNA-dependent RNA polymerase catalyzes the transcription of DNA into RNA using the four ribonucleoside triphosphates as substrates. This chain is DNA-directed RNA polymerase subunit alpha, found in Caldicellulosiruptor bescii (strain ATCC BAA-1888 / DSM 6725 / KCTC 15123 / Z-1320) (Anaerocellum thermophilum).